The primary structure comprises 608 residues: Afamin (608 aa).

An N-terminal signal peptide occupies residues 1 to 21; sequence MRHLKLTGFIFFLLPLTESLA. Albumin domains are found at residues 22–210, 211–403, and 404–599; these read LPTK…APIT, QYLK…KFNE, and TTQR…KTGD. Asparagine 33 is a glycosylation site (N-linked (GlcNAc...) asparagine). 11 disulfide bridges follow: cysteine 77-cysteine 86, cysteine 99-cysteine 114, cysteine 113-cysteine 124, cysteine 148-cysteine 193, cysteine 192-cysteine 201, cysteine 224-cysteine 270, cysteine 269-cysteine 277, cysteine 289-cysteine 303, cysteine 302-cysteine 313, cysteine 340-cysteine 385, and cysteine 384-cysteine 393. A glycan (N-linked (GlcNAc...) asparagine) is linked at asparagine 109. An N-linked (GlcNAc...) asparagine glycan is attached at asparagine 153. The interval 215–319 is binding pocket for hydrophobic ligands; sequence ASSSYQRNVC…REACIINANK (105 aa). An N-linked (GlcNAc...) asparagine glycan is attached at asparagine 402. 5 cysteine pairs are disulfide-bonded: cysteine 416–cysteine 462, cysteine 461–cysteine 470, cysteine 483–cysteine 499, cysteine 498–cysteine 509, and cysteine 580–cysteine 589. N-linked (GlcNAc...) asparagine glycosylation is present at asparagine 488. A disordered region spans residues 583 to 608; it reads VQEPESCFSPESSKTGDESQATEKQR. Residues 596–608 are compositionally biased toward basic and acidic residues; sequence KTGDESQATEKQR.

The protein belongs to the ALB/AFP/VDB family. In terms of assembly, forms a 1:1 complex with Wnt family members; interacts with WNT1, WNT2B, WNT3, WNT5A, WNT7A, WNT7B, WNT8, WNT9A, WNT9B, WNT10A and WNT10B. Interacts with WNT3A. In terms of processing, N-glycosylated; more than 90% of the glycans are sialylated. Detected in brain, especially on brain capillaries (at protein level). Expressed in isolated brain capillaries.

It localises to the secreted. In terms of biological role, functions as a carrier for hydrophobic molecules in body fluids. Essential for the solubility and activity of lipidated Wnt family members, including WNT1, WNT2B, WNT3, WNT3A, WNT5A, WNT7A, WNT7B, WNT8, WNT9A, WNT9B, WNT10A and WNT10B. Binds vitamin E. May transport vitamin E in body fluids under conditions where the lipoprotein system is not sufficient. May be involved in the transport of vitamin E across the blood-brain barrier. The protein is Afamin (Afm) of Mus musculus (Mouse).